The sequence spans 350 residues: Biotin synthase (350 aa).

The Radical SAM core domain maps to 38 to 256 (NYVQVSTLLS…IAIARIMMPQ (219 aa)). [4Fe-4S] cluster-binding residues include Cys53, Cys57, and Cys60. Cys97, Cys128, Cys188, and Arg260 together coordinate [2Fe-2S] cluster.

The protein belongs to the radical SAM superfamily. Biotin synthase family. As to quaternary structure, homodimer. The cofactor is [4Fe-4S] cluster. Requires [2Fe-2S] cluster as cofactor.

The catalysed reaction is (4R,5S)-dethiobiotin + (sulfur carrier)-SH + 2 reduced [2Fe-2S]-[ferredoxin] + 2 S-adenosyl-L-methionine = (sulfur carrier)-H + biotin + 2 5'-deoxyadenosine + 2 L-methionine + 2 oxidized [2Fe-2S]-[ferredoxin]. It functions in the pathway cofactor biosynthesis; biotin biosynthesis; biotin from 7,8-diaminononanoate: step 2/2. Functionally, catalyzes the conversion of dethiobiotin (DTB) to biotin by the insertion of a sulfur atom into dethiobiotin via a radical-based mechanism. In Vibrio campbellii (strain ATCC BAA-1116), this protein is Biotin synthase.